The chain runs to 818 residues: RNA-directed RNA polymerase (818 aa).

Residues 524–641 (PVAIGLDASR…IVERRNLKQI (118 aa)) enclose the RdRp catalytic domain.

It belongs to the tombusviridae RNA polymerase family.

The catalysed reaction is RNA(n) + a ribonucleoside 5'-triphosphate = RNA(n+1) + diphosphate. In terms of biological role, RNA-dependent RNA polymerase that plays an essential role in the virus replication. This Cucumis sativus (Cucumber) protein is RNA-directed RNA polymerase.